Consider the following 205-residue polypeptide: Holliday junction branch migration complex subunit RuvA (205 aa).

Residues 1 to 64 (MIGRLKGILV…EDAQLLYGFI (64 aa)) form a domain I region. The interval 65-143 (HKEERSLFRL…SLMEASMGAE (79 aa)) is domain II. Residues 144-156 (REFVLKSNFTPAP) form a flexible linker region. The domain III stretch occupies residues 157-205 (VAATVEEDAIAALLSLGYKPQQASKAVSSAFQEGMDPEQLIKAALKSML).

It belongs to the RuvA family. In terms of assembly, homotetramer. Forms an RuvA(8)-RuvB(12)-Holliday junction (HJ) complex. HJ DNA is sandwiched between 2 RuvA tetramers; dsDNA enters through RuvA and exits via RuvB. An RuvB hexamer assembles on each DNA strand where it exits the tetramer. Each RuvB hexamer is contacted by two RuvA subunits (via domain III) on 2 adjacent RuvB subunits; this complex drives branch migration. In the full resolvosome a probable DNA-RuvA(4)-RuvB(12)-RuvC(2) complex forms which resolves the HJ.

Its subcellular location is the cytoplasm. Its function is as follows. The RuvA-RuvB-RuvC complex processes Holliday junction (HJ) DNA during genetic recombination and DNA repair, while the RuvA-RuvB complex plays an important role in the rescue of blocked DNA replication forks via replication fork reversal (RFR). RuvA specifically binds to HJ cruciform DNA, conferring on it an open structure. The RuvB hexamer acts as an ATP-dependent pump, pulling dsDNA into and through the RuvAB complex. HJ branch migration allows RuvC to scan DNA until it finds its consensus sequence, where it cleaves and resolves the cruciform DNA. This Shewanella amazonensis (strain ATCC BAA-1098 / SB2B) protein is Holliday junction branch migration complex subunit RuvA.